A 176-amino-acid polypeptide reads, in one-letter code: Inner membrane-spanning protein YciB (176 aa).

5 consecutive transmembrane segments (helical) span residues Thr-24–His-44, Pro-49–His-69, Trp-76–Phe-96, Leu-119–Tyr-139, and Phe-149–Leu-169.

This sequence belongs to the YciB family.

Its subcellular location is the cell inner membrane. Plays a role in cell envelope biogenesis, maintenance of cell envelope integrity and membrane homeostasis. This chain is Inner membrane-spanning protein YciB, found in Paraburkholderia phytofirmans (strain DSM 17436 / LMG 22146 / PsJN) (Burkholderia phytofirmans).